Reading from the N-terminus, the 748-residue chain is Acyl-coenzyme A oxidase (748 aa).

Belongs to the acyl-CoA oxidase family. The cofactor is FAD.

The protein localises to the peroxisome. It catalyses the reaction a 2,3-saturated acyl-CoA + O2 = a (2E)-enoyl-CoA + H2O2. Its pathway is lipid metabolism; peroxisomal fatty acid beta-oxidation. The protein is Acyl-coenzyme A oxidase (POX1) of Candida glabrata (strain ATCC 2001 / BCRC 20586 / JCM 3761 / NBRC 0622 / NRRL Y-65 / CBS 138) (Yeast).